The following is a 557-amino-acid chain: Anthrax toxin receptor-like (557 aa).

A signal peptide spans 1-25 (MRSHGRWGPCFLLFLLLLPPPLFRA). At 26–345 (GSLRYHGPGW…KSNVSVTSST (320 aa)) the chain is on the extracellular side. A VWFA domain is found at 74-244 (DLYFILDKSG…KAMRDTVDAL (171 aa)). Residues Ser-82, Ser-84, and Thr-148 each contribute to the a divalent metal cation site. Residues 346 to 366 (CGIFSNWLYFLLPLLLLPLLL) form a helical membrane-spanning segment. Topologically, residues 367-557 (CCLWRLCRKK…PTSKAPNTQD (191 aa)) are cytoplasmic. Disordered regions lie at residues 380–411 (EPPP…LPPP) and 497–557 (ESPS…NTQD). The segment covering 386-395 (KPEKEPEQEK) has biased composition (basic and acidic residues). Residues 396–411 (PPPPPPPSPPPPLPPP) are compositionally biased toward pro residues. Positions 534–557 (GTLQNPLCPSLPRSPTSKAPNTQD) are enriched in polar residues.

It belongs to the ATR family.

It is found in the membrane. The protein is Anthrax toxin receptor-like (ANTXRL) of Macaca fascicularis (Crab-eating macaque).